Here is a 515-residue protein sequence, read N- to C-terminus: Cytochrome P450 76C3 (515 aa).

Residues 5–25 (LIQGMSLPLYFLLTLFFFFFA) traverse the membrane as a helical segment. Cysteine 451 serves as a coordination point for heme.

Belongs to the cytochrome P450 family. The cofactor is heme.

It is found in the membrane. The protein is Cytochrome P450 76C3 (CYP76C3) of Arabidopsis thaliana (Mouse-ear cress).